We begin with the raw amino-acid sequence, 932 residues long: Isoleucine--tRNA ligase (932 aa).

The 'HIGH' region motif lies at Pro-57 to His-67. Position 552 (Glu-552) interacts with L-isoleucyl-5'-AMP. Residues Lys-593–Ser-597 carry the 'KMSKS' region motif. Lys-596 provides a ligand contact to ATP. Cys-889, Cys-892, Cys-911, and Cys-914 together coordinate Zn(2+).

It belongs to the class-I aminoacyl-tRNA synthetase family. IleS type 1 subfamily. In terms of assembly, monomer. Requires Zn(2+) as cofactor.

The protein localises to the cytoplasm. It carries out the reaction tRNA(Ile) + L-isoleucine + ATP = L-isoleucyl-tRNA(Ile) + AMP + diphosphate. Catalyzes the attachment of isoleucine to tRNA(Ile). As IleRS can inadvertently accommodate and process structurally similar amino acids such as valine, to avoid such errors it has two additional distinct tRNA(Ile)-dependent editing activities. One activity is designated as 'pretransfer' editing and involves the hydrolysis of activated Val-AMP. The other activity is designated 'posttransfer' editing and involves deacylation of mischarged Val-tRNA(Ile). This Lactococcus lactis subsp. lactis (strain IL1403) (Streptococcus lactis) protein is Isoleucine--tRNA ligase.